The sequence spans 179 residues: ATP synthase subunit delta (179 aa).

The protein belongs to the ATPase delta chain family. As to quaternary structure, F-type ATPases have 2 components, F(1) - the catalytic core - and F(0) - the membrane proton channel. F(1) has five subunits: alpha(3), beta(3), gamma(1), delta(1), epsilon(1). F(0) has three main subunits: a(1), b(2) and c(10-14). The alpha and beta chains form an alternating ring which encloses part of the gamma chain. F(1) is attached to F(0) by a central stalk formed by the gamma and epsilon chains, while a peripheral stalk is formed by the delta and b chains.

It is found in the cell membrane. In terms of biological role, f(1)F(0) ATP synthase produces ATP from ADP in the presence of a proton or sodium gradient. F-type ATPases consist of two structural domains, F(1) containing the extramembraneous catalytic core and F(0) containing the membrane proton channel, linked together by a central stalk and a peripheral stalk. During catalysis, ATP synthesis in the catalytic domain of F(1) is coupled via a rotary mechanism of the central stalk subunits to proton translocation. This protein is part of the stalk that links CF(0) to CF(1). It either transmits conformational changes from CF(0) to CF(1) or is implicated in proton conduction. The polypeptide is ATP synthase subunit delta (Clostridium acetobutylicum (strain ATCC 824 / DSM 792 / JCM 1419 / IAM 19013 / LMG 5710 / NBRC 13948 / NRRL B-527 / VKM B-1787 / 2291 / W)).